Reading from the N-terminus, the 342-residue chain is tRNA N6-adenosine threonylcarbamoyltransferase (342 aa).

The Fe cation site is built by His111 and His115. Substrate is bound by residues 133–137, Asp166, Gly179, Asp183, and Asn273; that span reads AVSGG. Asp301 serves as a coordination point for Fe cation.

This sequence belongs to the KAE1 / TsaD family. Fe(2+) serves as cofactor.

The protein localises to the cytoplasm. The catalysed reaction is L-threonylcarbamoyladenylate + adenosine(37) in tRNA = N(6)-L-threonylcarbamoyladenosine(37) in tRNA + AMP + H(+). Functionally, required for the formation of a threonylcarbamoyl group on adenosine at position 37 (t(6)A37) in tRNAs that read codons beginning with adenine. Is involved in the transfer of the threonylcarbamoyl moiety of threonylcarbamoyl-AMP (TC-AMP) to the N6 group of A37, together with TsaE and TsaB. TsaD likely plays a direct catalytic role in this reaction. This is tRNA N6-adenosine threonylcarbamoyltransferase from Syntrophotalea carbinolica (strain DSM 2380 / NBRC 103641 / GraBd1) (Pelobacter carbinolicus).